We begin with the raw amino-acid sequence, 86 residues long: Omega-theraphotoxin-Hhn1a 2 (86 aa).

The first 21 residues, 1-21 (MKSIVFVALLGLALLAVVCSA), serve as a signal peptide directing secretion. The propeptide occupies 22-50 (SEDAHKELLKEVVRAMVVDKTDAVQAEER). 3 disulfides stabilise this stretch: Cys-52–Cys-66, Cys-59–Cys-71, and Cys-65–Cys-78.

The protein belongs to the neurotoxin 10 (Hwtx-1) family. 17 (Hntx-9) subfamily. In terms of tissue distribution, expressed by the venom gland.

Its subcellular location is the secreted. In terms of biological role, ion channel inhibitor. This Cyriopagopus hainanus (Chinese bird spider) protein is Omega-theraphotoxin-Hhn1a 2.